The following is a 201-amino-acid chain: Holliday junction branch migration complex subunit RuvA (201 aa).

Residues 1 to 64 form a domain I region; sequence MYEYIRGQFQ…EDFIGLYGFT (64 aa). A domain II region spans residues 65–143; it reads TKEELEMFKL…PDELTSEEEQ (79 aa). A flexible linker region spans residues 144 to 152; sequence LIEGINDNS. The interval 153 to 201 is domain III; that stretch reads DYSFNINETLSALMALGYTEKEAQKALEKVDKTLSIENMIKESLKLLMR.

Belongs to the RuvA family. In terms of assembly, homotetramer. Forms an RuvA(8)-RuvB(12)-Holliday junction (HJ) complex. HJ DNA is sandwiched between 2 RuvA tetramers; dsDNA enters through RuvA and exits via RuvB. An RuvB hexamer assembles on each DNA strand where it exits the tetramer. Each RuvB hexamer is contacted by two RuvA subunits (via domain III) on 2 adjacent RuvB subunits; this complex drives branch migration. In the full resolvosome a probable DNA-RuvA(4)-RuvB(12)-RuvC(2) complex forms which resolves the HJ.

It is found in the cytoplasm. The RuvA-RuvB-RuvC complex processes Holliday junction (HJ) DNA during genetic recombination and DNA repair, while the RuvA-RuvB complex plays an important role in the rescue of blocked DNA replication forks via replication fork reversal (RFR). RuvA specifically binds to HJ cruciform DNA, conferring on it an open structure. The RuvB hexamer acts as an ATP-dependent pump, pulling dsDNA into and through the RuvAB complex. HJ branch migration allows RuvC to scan DNA until it finds its consensus sequence, where it cleaves and resolves the cruciform DNA. The protein is Holliday junction branch migration complex subunit RuvA of Clostridium perfringens (strain SM101 / Type A).